A 1578-amino-acid polypeptide reads, in one-letter code: DNA-directed RNA polymerase subunit beta' (1578 aa).

Zn(2+)-binding residues include Cys101, Cys103, Cys115, and Cys118. Mg(2+) is bound by residues Asp1286, Asp1288, and Asp1290.

It belongs to the RNA polymerase beta' chain family. RpoC1 subfamily. In plastids the minimal PEP RNA polymerase catalytic core is composed of four subunits: alpha, beta, beta', and beta''. When a (nuclear-encoded) sigma factor is associated with the core the holoenzyme is formed, which can initiate transcription. The cofactor is Mg(2+). Zn(2+) serves as cofactor.

The protein localises to the plastid. The protein resides in the chloroplast. It catalyses the reaction RNA(n) + a ribonucleoside 5'-triphosphate = RNA(n+1) + diphosphate. In terms of biological role, DNA-dependent RNA polymerase catalyzes the transcription of DNA into RNA using the four ribonucleoside triphosphates as substrates. In Tupiella akineta (Green alga), this protein is DNA-directed RNA polymerase subunit beta'.